The chain runs to 449 residues: Tol-Pal system protein TolB (449 aa).

Positions 1–36 (MDCPNMPLHINRRQMLLSAATAAGALALGPARDAFG) are cleaved as a signal peptide.

It belongs to the TolB family. In terms of assembly, the Tol-Pal system is composed of five core proteins: the inner membrane proteins TolA, TolQ and TolR, the periplasmic protein TolB and the outer membrane protein Pal. They form a network linking the inner and outer membranes and the peptidoglycan layer.

Its subcellular location is the periplasm. Part of the Tol-Pal system, which plays a role in outer membrane invagination during cell division and is important for maintaining outer membrane integrity. The sequence is that of Tol-Pal system protein TolB from Rhodopseudomonas palustris (strain HaA2).